Consider the following 289-residue polypeptide: uncharacterized protein (289 aa).

The next 10 helical transmembrane spans lie at 7–27, 33–53, 65–85, 92–112, 123–143, 148–168, 182–202, 212–232, 241–261, and 265–285; these read LLLA…KIGL, FNLA…WVFW, WLHL…FQFL, ATNA…WGLV, GVFL…LEFF, IFGD…TVLG, AYAF…SGFA, VAAL…VWYY, SVAV…FYAL, and PDFF…LTTA. 2 EamA domains span residues 14–136 and 159–285; these read LIWA…LIVS and FLWA…LTTA.

It belongs to the EamA transporter family.

It is found in the cell membrane. This is an uncharacterized protein from Archaeoglobus fulgidus (strain ATCC 49558 / DSM 4304 / JCM 9628 / NBRC 100126 / VC-16).